Reading from the N-terminus, the 336-residue chain is MSLPEFSMRGLLESGAHFGHQAHRWNPKMAPYIFGARNNIHIIDLAQTVPLLHQALKAISDTVARGGRVLFVGTKRQAQEAIADAAQRSAQYYVNSRWLGGMLTNWKTISASIQRLRKLDEILASGAGGLTKKERLMMSRERDKLEKALGGIKDMGGVPDLIFVIDTNKEQLAIQEAERLHIPVAAILDTNCDPDGITYPIPGNDDAGRAISLYCDLIARAALDGISRSQGMGGFDAGELEAPVEDLPPVEGEYEAAPTEIFELLDAPRGAPDDLAKLPGSGPQIVKKLNDAGIFHYWQVAAMTPEDVAKLDHDLKLSGRIERDGWVNQARSLIAS.

It belongs to the universal ribosomal protein uS2 family.

This chain is Small ribosomal subunit protein uS2, found in Beijerinckia indica subsp. indica (strain ATCC 9039 / DSM 1715 / NCIMB 8712).